The sequence spans 158 residues: Large ribosomal subunit protein uL16 (158 aa).

Residues 1–22 form a disordered region; that stretch reads MLSPKRTKYRKQQRGRMKGKAT.

The protein belongs to the universal ribosomal protein uL16 family. As to quaternary structure, part of the 50S ribosomal subunit.

Functionally, binds 23S rRNA and is also seen to make contacts with the A and possibly P site tRNAs. This is Large ribosomal subunit protein uL16 from Synechococcus sp. (strain JA-3-3Ab) (Cyanobacteria bacterium Yellowstone A-Prime).